The primary structure comprises 86 residues: uncharacterized protein (86 aa).

TPR repeat units follow at residues 8–41 (AEYY…NPFY) and 42–75 (RDAW…EKHL).

This is an uncharacterized protein from Methanocaldococcus jannaschii (strain ATCC 43067 / DSM 2661 / JAL-1 / JCM 10045 / NBRC 100440) (Methanococcus jannaschii).